Reading from the N-terminus, the 542-residue chain is Phenylalanine--tRNA ligase beta subunit (542 aa).

Residues 269–344 (LRRYTVSVSA…MTIGYDKLSP (76 aa)) form the B5 domain. Mg(2+) contacts are provided by Asp-322, Asp-328, Glu-331, and Glu-332.

It belongs to the phenylalanyl-tRNA synthetase beta subunit family. Type 2 subfamily. As to quaternary structure, tetramer of two alpha and two beta subunits. Mg(2+) is required as a cofactor.

It is found in the cytoplasm. It catalyses the reaction tRNA(Phe) + L-phenylalanine + ATP = L-phenylalanyl-tRNA(Phe) + AMP + diphosphate + H(+). This is Phenylalanine--tRNA ligase beta subunit from Sulfolobus acidocaldarius (strain ATCC 33909 / DSM 639 / JCM 8929 / NBRC 15157 / NCIMB 11770).